The primary structure comprises 410 residues: Peptidase T (410 aa).

H79 provides a ligand contact to Zn(2+). D81 is a catalytic residue. Residue D142 participates in Zn(2+) binding. E176 (proton acceptor) is an active-site residue. Residues E177, D199, and H381 each contribute to the Zn(2+) site.

The protein belongs to the peptidase M20B family. Zn(2+) is required as a cofactor.

It is found in the cytoplasm. The enzyme catalyses Release of the N-terminal residue from a tripeptide.. In terms of biological role, cleaves the N-terminal amino acid of tripeptides. The polypeptide is Peptidase T (Bacillus thuringiensis subsp. konkukian (strain 97-27)).